The sequence spans 339 residues: Glycerol-3-phosphate dehydrogenase [NAD(P)+] (339 aa).

S15, Y16, H36, and K110 together coordinate NADPH. Residues K110, G139, and T141 each contribute to the sn-glycerol 3-phosphate site. Residue A143 participates in NADPH binding. K195, D248, S258, R259, and N260 together coordinate sn-glycerol 3-phosphate. The Proton acceptor role is filled by K195. Position 259 (R259) interacts with NADPH. Positions 283 and 285 each coordinate NADPH.

The protein belongs to the NAD-dependent glycerol-3-phosphate dehydrogenase family.

The protein localises to the cytoplasm. The catalysed reaction is sn-glycerol 3-phosphate + NAD(+) = dihydroxyacetone phosphate + NADH + H(+). It catalyses the reaction sn-glycerol 3-phosphate + NADP(+) = dihydroxyacetone phosphate + NADPH + H(+). It participates in membrane lipid metabolism; glycerophospholipid metabolism. Functionally, catalyzes the reduction of the glycolytic intermediate dihydroxyacetone phosphate (DHAP) to sn-glycerol 3-phosphate (G3P), the key precursor for phospholipid synthesis. This Cronobacter sakazakii (strain ATCC BAA-894) (Enterobacter sakazakii) protein is Glycerol-3-phosphate dehydrogenase [NAD(P)+].